A 97-amino-acid polypeptide reads, in one-letter code: Large ribosomal subunit protein bL25 (97 aa).

This sequence belongs to the bacterial ribosomal protein bL25 family. In terms of assembly, part of the 50S ribosomal subunit; part of the 5S rRNA/L5/L18/L25 subcomplex. Contacts the 5S rRNA. Binds to the 5S rRNA independently of L5 and L18.

This is one of the proteins that binds to the 5S RNA in the ribosome where it forms part of the central protuberance. This chain is Large ribosomal subunit protein bL25, found in Buchnera aphidicola subsp. Baizongia pistaciae (strain Bp).